The chain runs to 113 residues: UPF0102 protein CHU_0465 (113 aa).

It belongs to the UPF0102 family.

In Cytophaga hutchinsonii (strain ATCC 33406 / DSM 1761 / CIP 103989 / NBRC 15051 / NCIMB 9469 / D465), this protein is UPF0102 protein CHU_0465.